Here is a 469-residue protein sequence, read N- to C-terminus: Glutamate--tRNA ligase (469 aa).

Residues 9 to 19 (PSPTGFLHVGG) carry the 'HIGH' region motif. Zn(2+) contacts are provided by Cys98, Cys100, Cys125, and Asp127. The 'KMSKS' region signature appears at 236-240 (KLSKR). Lys239 contacts ATP.

It belongs to the class-I aminoacyl-tRNA synthetase family. Glutamate--tRNA ligase type 1 subfamily. Monomer. Zn(2+) serves as cofactor.

It localises to the cytoplasm. The catalysed reaction is tRNA(Glu) + L-glutamate + ATP = L-glutamyl-tRNA(Glu) + AMP + diphosphate. Its function is as follows. Catalyzes the attachment of glutamate to tRNA(Glu) in a two-step reaction: glutamate is first activated by ATP to form Glu-AMP and then transferred to the acceptor end of tRNA(Glu). The protein is Glutamate--tRNA ligase of Shewanella putrefaciens (strain CN-32 / ATCC BAA-453).